The primary structure comprises 198 residues: Pyridoxine/pyridoxamine 5'-phosphate oxidase (198 aa).

Residues 47–52 (RMVLVK), 62–63 (FT), Arg68, Lys69, and Gln91 each bind FMN. Lys52 contacts substrate. Positions 109, 113, and 117 each coordinate substrate. FMN is bound by residues 126 to 127 (QS) and Trp171. 177–179 (RLH) lines the substrate pocket. Arg181 contributes to the FMN binding site.

It belongs to the pyridoxamine 5'-phosphate oxidase family. In terms of assembly, homodimer. Requires FMN as cofactor.

It catalyses the reaction pyridoxamine 5'-phosphate + O2 + H2O = pyridoxal 5'-phosphate + H2O2 + NH4(+). The enzyme catalyses pyridoxine 5'-phosphate + O2 = pyridoxal 5'-phosphate + H2O2. Its pathway is cofactor metabolism; pyridoxal 5'-phosphate salvage; pyridoxal 5'-phosphate from pyridoxamine 5'-phosphate: step 1/1. It participates in cofactor metabolism; pyridoxal 5'-phosphate salvage; pyridoxal 5'-phosphate from pyridoxine 5'-phosphate: step 1/1. Functionally, catalyzes the oxidation of either pyridoxine 5'-phosphate (PNP) or pyridoxamine 5'-phosphate (PMP) into pyridoxal 5'-phosphate (PLP). The sequence is that of Pyridoxine/pyridoxamine 5'-phosphate oxidase from Anaeromyxobacter dehalogenans (strain 2CP-C).